Reading from the N-terminus, the 121-residue chain is Small ribosomal subunit protein uS11 (121 aa).

The protein belongs to the universal ribosomal protein uS11 family. In terms of assembly, part of the 30S ribosomal subunit. Interacts with proteins S7 and S18. Binds to IF-3.

Functionally, located on the platform of the 30S subunit, it bridges several disparate RNA helices of the 16S rRNA. Forms part of the Shine-Dalgarno cleft in the 70S ribosome. This chain is Small ribosomal subunit protein uS11, found in Mycoplasma pneumoniae (strain ATCC 29342 / M129 / Subtype 1) (Mycoplasmoides pneumoniae).